The sequence spans 827 residues: Lon protease (827 aa).

The segment at 1-27 (MNDETLREQTTAESEETSPTTPSPEPE) is disordered. The region spanning 32-225 (LPLIPLEGAV…KVLMFYRKQF (194 aa)) is the Lon N-terminal domain. 385–392 (GPPGVGKT) provides a ligand contact to ATP. The Lon proteolytic domain maps to 625 to 806 (IDQPGVAIGL…DEVLSIALLP (182 aa)). Residues Ser712 and Lys755 contribute to the active site.

This sequence belongs to the peptidase S16 family. Homohexamer. Organized in a ring with a central cavity.

The protein resides in the cytoplasm. It carries out the reaction Hydrolysis of proteins in presence of ATP.. Its function is as follows. ATP-dependent serine protease that mediates the selective degradation of mutant and abnormal proteins as well as certain short-lived regulatory proteins. Required for cellular homeostasis and for survival from DNA damage and developmental changes induced by stress. Degrades polypeptides processively to yield small peptide fragments that are 5 to 10 amino acids long. Binds to DNA in a double-stranded, site-specific manner. The polypeptide is Lon protease (Chloroflexus aurantiacus (strain ATCC 29366 / DSM 635 / J-10-fl)).